A 137-amino-acid polypeptide reads, in one-letter code: Putative transcription elongation factor S-II-like protein 055R (137 aa).

The TFIIS-type zinc-finger motif lies at 85–136 (DFITCPYEVSEGVLRCGKCDCTKILWFSKQTRSMDEPTTIFASCSNCKTRWT). 4 residues coordinate Zn(2+): Cys89, Cys103, Cys128, and Cys131.

The protein belongs to the IIV-6 349L family.

The protein is Putative transcription elongation factor S-II-like protein 055R of Aedes vexans (Inland floodwater mosquito).